The chain runs to 176 residues: MGYYDDDAHGHVEADAAPRATTGTGTGSASQTVTIPCHHIRLGDILILQGRPCQVIRISTSAATGQHRYLGVDLFTKQLHEESSFVSNPAPSVVVQTMLGPVFKQYRVLDMQDGSIVAMTETGDVKQNLPVIDQSSLWNRLQKAFESGRGSVRVLVVSDHGREMAVDMKVVHGSRL.

A propeptide spanning residues M1–A16 is cleaved from the precursor. Positions M1–A16 are enriched in basic and acidic residues. A disordered region spans residues M1 to Q31. Positions S174 to L176 match the Microbody targeting signal motif.

The protein belongs to the eIF-5A family. Hex1 subfamily. In terms of assembly, forms oligomers. Self-assembles into hexagonal rods.

Its subcellular location is the cell septum. In terms of biological role, major component of Woronin bodies, fungal-specific organelles that occlude septal pores in order to separate intact from damaged compartments. Hex-1 binds directly or indirectly to the Woronin body tether that in turn is anchored at the rim of the septal pore. In Neurospora crassa (strain ATCC 24698 / 74-OR23-1A / CBS 708.71 / DSM 1257 / FGSC 987), this protein is Woronin body major protein.